We begin with the raw amino-acid sequence, 330 residues long: ADP-L-glycero-D-manno-heptose-6-epimerase (330 aa).

NADP(+)-binding positions include phenylalanine 11–isoleucine 12, aspartate 32–asparagine 33, lysine 39, lysine 54, glutamate 75–serine 79, and asparagine 92. Catalysis depends on tyrosine 139, which acts as the Proton acceptor. Residue lysine 143 coordinates NADP(+). Asparagine 168 is a substrate binding site. The NADP(+) site is built by valine 169 and lysine 177. Lysine 177 serves as the catalytic Proton acceptor. Residues arginine 179, histidine 186, phenylalanine 200 to tyrosine 203, arginine 213, and tyrosine 292 each bind substrate.

It belongs to the NAD(P)-dependent epimerase/dehydratase family. HldD subfamily. Homopentamer. NADP(+) is required as a cofactor.

It carries out the reaction ADP-D-glycero-beta-D-manno-heptose = ADP-L-glycero-beta-D-manno-heptose. It participates in nucleotide-sugar biosynthesis; ADP-L-glycero-beta-D-manno-heptose biosynthesis; ADP-L-glycero-beta-D-manno-heptose from D-glycero-beta-D-manno-heptose 7-phosphate: step 4/4. Its function is as follows. Catalyzes the interconversion between ADP-D-glycero-beta-D-manno-heptose and ADP-L-glycero-beta-D-manno-heptose via an epimerization at carbon 6 of the heptose. The protein is ADP-L-glycero-D-manno-heptose-6-epimerase of Burkholderia vietnamiensis (strain G4 / LMG 22486) (Burkholderia cepacia (strain R1808)).